A 340-amino-acid chain; its full sequence is S-adenosylmethionine:tRNA ribosyltransferase-isomerase (340 aa).

Belongs to the QueA family. In terms of assembly, monomer.

It is found in the cytoplasm. It catalyses the reaction 7-aminomethyl-7-carbaguanosine(34) in tRNA + S-adenosyl-L-methionine = epoxyqueuosine(34) in tRNA + adenine + L-methionine + 2 H(+). It participates in tRNA modification; tRNA-queuosine biosynthesis. Functionally, transfers and isomerizes the ribose moiety from AdoMet to the 7-aminomethyl group of 7-deazaguanine (preQ1-tRNA) to give epoxyqueuosine (oQ-tRNA). The sequence is that of S-adenosylmethionine:tRNA ribosyltransferase-isomerase from Macrococcus caseolyticus (strain JCSC5402) (Macrococcoides caseolyticum).